The primary structure comprises 249 residues: NADH dehydrogenase [ubiquinone] flavoprotein 2, mitochondrial (249 aa).

A mitochondrion-targeting transit peptide spans 1 to 32 (MFLSAALRARAAGLAAHWGKHIRNLHKTAVQN). Position 61 is an N6-acetyllysine (lysine 61). Cysteine 135, cysteine 140, cysteine 176, and cysteine 180 together coordinate [2Fe-2S] cluster. Phosphotyrosine; by SRC is present on tyrosine 193. Residues 213–249 (IPKPGPRSGRFSCEPAGGLTSLTEPPKGPGFGVQAGL) form a disordered region.

The protein belongs to the complex I 24 kDa subunit family. As to quaternary structure, core subunit of respiratory chain NADH dehydrogenase (Complex I) which is composed of 45 different subunits. This is a component of the flavoprotein-sulfur (FP) fragment of the enzyme. Requires [2Fe-2S] cluster as cofactor.

The protein resides in the mitochondrion inner membrane. The enzyme catalyses a ubiquinone + NADH + 5 H(+)(in) = a ubiquinol + NAD(+) + 4 H(+)(out). Core subunit of the mitochondrial membrane respiratory chain NADH dehydrogenase (Complex I) which catalyzes electron transfer from NADH through the respiratory chain, using ubiquinone as an electron acceptor. Parts of the peripheral arm of the enzyme, where the electrons from NADH are accepted by flavin mononucleotide (FMN) and then passed along a chain of iron-sulfur clusters by electron tunnelling to the final acceptor ubiquinone. Contains one iron-sulfur cluster. The sequence is that of NADH dehydrogenase [ubiquinone] flavoprotein 2, mitochondrial (NDUFV2) from Bos taurus (Bovine).